Here is a 554-residue protein sequence, read N- to C-terminus: (+)-delta-cadinene synthase isozyme XC14 (554 aa).

Low complexity predominate over residues 1–16 (MASQVSQMPSSSPLSS). The tract at residues 1–23 (MASQVSQMPSSSPLSSNKDEMRP) is disordered. Mg(2+) is bound by residues D307, D311, and D451. A DDXXD motif motif is present at residues 307–311 (DDTYD).

This sequence belongs to the terpene synthase family. The cofactor is Mg(2+).

The catalysed reaction is (2E,6E)-farnesyl diphosphate = (1S,8aR)-delta-cadinene + diphosphate. It participates in secondary metabolite biosynthesis; terpenoid biosynthesis. In terms of biological role, responsible for the cyclization of trans,trans-farnesyl diphosphate (FPP) to (+)-delta cadinene. The chain is (+)-delta-cadinene synthase isozyme XC14 from Gossypium arboreum (Tree cotton).